A 481-amino-acid chain; its full sequence is Glutamyl-tRNA(Gln) amidotransferase subunit A (481 aa).

Residues K74 and S149 each act as charge relay system in the active site. S173 functions as the Acyl-ester intermediate in the catalytic mechanism.

Belongs to the amidase family. GatA subfamily. In terms of assembly, heterotrimer of A, B and C subunits.

The catalysed reaction is L-glutamyl-tRNA(Gln) + L-glutamine + ATP + H2O = L-glutaminyl-tRNA(Gln) + L-glutamate + ADP + phosphate + H(+). Functionally, allows the formation of correctly charged Gln-tRNA(Gln) through the transamidation of misacylated Glu-tRNA(Gln) in organisms which lack glutaminyl-tRNA synthetase. The reaction takes place in the presence of glutamine and ATP through an activated gamma-phospho-Glu-tRNA(Gln). The polypeptide is Glutamyl-tRNA(Gln) amidotransferase subunit A (Francisella tularensis subsp. novicida (strain U112)).